The primary structure comprises 273 residues: Putative phosphoenolpyruvate synthase regulatory protein (273 aa).

Residue 154 to 161 (GVSRSGKT) coordinates ADP.

The protein belongs to the pyruvate, phosphate/water dikinase regulatory protein family. PSRP subfamily.

It carries out the reaction [pyruvate, water dikinase] + ADP = [pyruvate, water dikinase]-phosphate + AMP + H(+). The catalysed reaction is [pyruvate, water dikinase]-phosphate + phosphate + H(+) = [pyruvate, water dikinase] + diphosphate. Bifunctional serine/threonine kinase and phosphorylase involved in the regulation of the phosphoenolpyruvate synthase (PEPS) by catalyzing its phosphorylation/dephosphorylation. This is Putative phosphoenolpyruvate synthase regulatory protein from Neisseria meningitidis serogroup C (strain 053442).